Reading from the N-terminus, the 2130-residue chain is Bromodomain adjacent to zinc finger domain protein 2B (2130 aa).

Disordered regions lie at residues 1 to 42, 82 to 118, 151 to 293, 491 to 518, 543 to 633, 756 to 790, and 944 to 966; these read MESG…TGAA, LFAP…SLNG, GGRK…QKQP, KTTG…PVSN, VDSD…SSIG, EGRR…GSTE, and RKKA…LNKE. The span at 8 to 33 shows a compositional bias: low complexity; the sequence is TSSSVSSTAAASSPVSSTPSVASAVS. The segment covering 183–206 has biased composition (low complexity); the sequence is ESSSNSDSDSGSSSDTSSEGISSS. Acidic residues predominate over residues 207 to 234; the sequence is DSDDLEEDEEEEEDQSAEESEDDESDSE. The span at 250 to 270 shows a compositional bias: basic and acidic residues; the sequence is GVKDMKTDGQKAHEKSQEKRT. Polar residues predominate over residues 272–283; the sequence is QQIPLVSDSQTH. Residues 284–293 show a composition bias toward low complexity; sequence SSFQSQQKQP. Residues 492-505 show a composition bias toward polar residues; it reads TTGNRTLVVPSTSP. Over residues 543–554 the composition is skewed to basic and acidic residues; sequence VDSDAPSSKESD. Positions 555–611 are enriched in acidic residues; sequence DSNDDDDDDEDEDEDDEDDDSDDSQSESDSNSESDTDGSEDEDDEDDKDQDESDTDT. Positions 623–633 are enriched in low complexity; that stretch reads TGSSIKSSSIG. One can recognise an MBD domain in the interval 687–762; that stretch reads VTDERELRVP…RAMEGRRGRP (76 aa). Residues 756-775 are compositionally biased toward basic and acidic residues; it reads EGRRGRPPNPDRQHSREESR. The stretch at 797-984 forms a coiled coil; the sequence is AKLLRKLQAQ…ELEMAKELKK (188 aa). In terms of domain architecture, DDT spans 1010 to 1075; sequence GSTFSDCLMI…VTAAVCDPGL (66 aa). Disordered regions lie at residues 1186–1265, 1431–1454, 1499–1545, and 1773–1795; these read TGKR…DQTV, SLCS…NLFS, VTHV…PFAM, and HKKH…ERKN. Residues 1220-1244 show a composition bias toward acidic residues; the sequence is SDYDDDDDDDSDDQADEDDEDEEDK. The segment covering 1245-1254 has biased composition (basic and acidic residues); it reads EDKKGKKAEV. Positions 1514 to 1526 are enriched in pro residues; it reads SHPPSKSPSPVPS. Residues 1895–1945 form a PHD-type zinc finger; it reads KVYCQICRKGDNEELLLLCDGCDKGCHTYCHRPKITTIPDGDWFCPACIAK. Residues 1957–2019 form a disordered region; the sequence is QIKGKKSNEQ…KQENFTAIKK (63 aa). Residues 1991-2002 are compositionally biased toward basic and acidic residues; sequence GKTEPKKRKMDE. Over residues 2004–2014 the composition is skewed to polar residues; that stretch reads VSVSQGKQENF. Residues 2022–2126 enclose the Bromo domain; it reads RDDSKDLAIC…KYFEKKWTEI (105 aa).

Belongs to the WAL family.

It is found in the nucleus. In terms of biological role, regulatory subunit of the ATP-dependent BRF-1 and BRF-5 ISWI chromatin remodeling complexes, which form ordered nucleosome arrays on chromatin and facilitate access to DNA during DNA-templated processes such as DNA replication, transcription, and repair. Both complexes regulate the spacing of nucleosomes along the chromatin and have the ability to slide mononucleosomes to the center of a DNA template. The BRF-1 ISWI chromatin remodeling complex has a lower ATP hydrolysis rate than the BRF-5 ISWI chromatin remodeling complex. Chromatin reader protein. Represses the expression of mitochondrial function-related genes, perhaps by transcriptional regulation. This Gallus gallus (Chicken) protein is Bromodomain adjacent to zinc finger domain protein 2B (BAZ2B).